The sequence spans 181 residues: D-lyxose/D-mannose isomerase (181 aa).

The Mn(2+) site is built by histidine 75, histidine 77, glutamate 88, and histidine 143.

Belongs to the D-lyxose ketol-isomerase family. As to quaternary structure, homodimer. Mn(2+) serves as cofactor.

It carries out the reaction D-lyxose = D-xylulose. It catalyses the reaction D-mannose = D-fructose. Its function is as follows. Sugar isomerase that catalyzes the reversible isomerization of D-lyxose to D-xylulose, and D-mannose to D-fructose. Shows optimum activity using D-lyxose as substrate, but can also effectively catalyze the isomerization between D-fructose and D-mannose. The chain is D-lyxose/D-mannose isomerase from Thermosediminibacter oceani (strain ATCC BAA-1034 / DSM 16646 / JW/IW-1228P).